The primary structure comprises 448 residues: Trigger factor (448 aa).

Residues 172 to 257 (GDRVTVDFVG…MKKIEWPHLP (86 aa)) enclose the PPIase FKBP-type domain.

This sequence belongs to the FKBP-type PPIase family. Tig subfamily.

It is found in the cytoplasm. It carries out the reaction [protein]-peptidylproline (omega=180) = [protein]-peptidylproline (omega=0). Involved in protein export. Acts as a chaperone by maintaining the newly synthesized protein in an open conformation. Functions as a peptidyl-prolyl cis-trans isomerase. This chain is Trigger factor, found in Burkholderia orbicola (strain MC0-3).